The chain runs to 155 residues: UPF0178 protein TDE_2151 (155 aa).

Belongs to the UPF0178 family.

This is UPF0178 protein TDE_2151 from Treponema denticola (strain ATCC 35405 / DSM 14222 / CIP 103919 / JCM 8153 / KCTC 15104).